We begin with the raw amino-acid sequence, 211 residues long: N-(5'-phosphoribosyl)anthranilate isomerase (211 aa).

It belongs to the TrpF family.

The enzyme catalyses N-(5-phospho-beta-D-ribosyl)anthranilate = 1-(2-carboxyphenylamino)-1-deoxy-D-ribulose 5-phosphate. It functions in the pathway amino-acid biosynthesis; L-tryptophan biosynthesis; L-tryptophan from chorismate: step 3/5. The polypeptide is N-(5'-phosphoribosyl)anthranilate isomerase (Pseudomonas aeruginosa (strain LESB58)).